Here is a 378-residue protein sequence, read N- to C-terminus: Mannitol-1-phosphate 5-dehydrogenase (378 aa).

4–15 (SVHFGAGNIGRG) serves as a coordination point for NAD(+).

The protein belongs to the mannitol dehydrogenase family.

The catalysed reaction is D-mannitol 1-phosphate + NAD(+) = beta-D-fructose 6-phosphate + NADH + H(+). The polypeptide is Mannitol-1-phosphate 5-dehydrogenase (Streptococcus pneumoniae (strain JJA)).